A 65-amino-acid chain; its full sequence is Conotoxin Lt5.1 (65 aa).

The N-terminal stretch at Met1–Ser19 is a signal peptide. The propeptide occupies Val20–Asn48.

This sequence belongs to the conotoxin T superfamily. In terms of processing, contains 2 disulfide bonds that can be either 'C1-C3, C2-C4' or 'C1-C4, C2-C3', since these disulfide connectivities have been observed for conotoxins with cysteine framework V (for examples, see AC P0DQQ7 and AC P81755). As to expression, expressed by the venom duct.

It localises to the secreted. This Conus litteratus (Lettered cone) protein is Conotoxin Lt5.1.